The sequence spans 224 residues: UPF0758 protein AFE_0358 (224 aa).

Positions 102–224 constitute an MPN domain; the sequence is GLDSPLRVRQ…PLSLREQGGW (123 aa). Zn(2+)-binding residues include histidine 173, histidine 175, and aspartate 186. Residues 173-186 carry the JAMM motif motif; sequence HNHPSGVAEPSAAD.

Belongs to the UPF0758 family.

The protein is UPF0758 protein AFE_0358 of Acidithiobacillus ferrooxidans (strain ATCC 23270 / DSM 14882 / CIP 104768 / NCIMB 8455) (Ferrobacillus ferrooxidans (strain ATCC 23270)).